Consider the following 103-residue polypeptide: Large ribosomal subunit protein uL24 (103 aa).

This sequence belongs to the universal ribosomal protein uL24 family. As to quaternary structure, part of the 50S ribosomal subunit.

In terms of biological role, one of two assembly initiator proteins, it binds directly to the 5'-end of the 23S rRNA, where it nucleates assembly of the 50S subunit. One of the proteins that surrounds the polypeptide exit tunnel on the outside of the subunit. The chain is Large ribosomal subunit protein uL24 from Actinobacillus pleuropneumoniae serotype 5b (strain L20).